Here is a 389-residue protein sequence, read N- to C-terminus: MRFGFSTAGESHGPAEVVIVHGVPAGLRLLAEDVDRDLARRQLGYGRGGRQKIERDRVEFLGGVRHGRTLGSPVAMLVRNRDYANWERRMNPAPVEDPPEPITLPRPGHADLAGMQKYGFGDLRNVLERSSARETVARVAAGAVARRLLGEFGVRVFSAVYRIGEVAMDRALAAAGAGKADRSEVRCPDPEVSERMKAEIDAARHARDALGGEFVVVAEGCPPGLGSYADWRDRLDARLAAAVVSINAIKGVEIGDAFEAARRRSSEVQDEIVRRGGALGRASNRLGGLEGGMTNGEPVVVAAAMKPISTIARALRTVDLSTGEEARAFRERADSCAVPAAAVIGEAMVAVVLAEAFLEKFGADALEDIRASYEHYMRRIGLPARRADA.

Arg-41 and Arg-47 together coordinate NADP(+). FMN-binding positions include 129-131 (RSS), 247-248 (NA), Gly-291, 306-310 (KPIST), and Arg-332.

It belongs to the chorismate synthase family. Homotetramer. FMNH2 serves as cofactor.

It carries out the reaction 5-O-(1-carboxyvinyl)-3-phosphoshikimate = chorismate + phosphate. The protein operates within metabolic intermediate biosynthesis; chorismate biosynthesis; chorismate from D-erythrose 4-phosphate and phosphoenolpyruvate: step 7/7. In terms of biological role, catalyzes the anti-1,4-elimination of the C-3 phosphate and the C-6 proR hydrogen from 5-enolpyruvylshikimate-3-phosphate (EPSP) to yield chorismate, which is the branch point compound that serves as the starting substrate for the three terminal pathways of aromatic amino acid biosynthesis. This reaction introduces a second double bond into the aromatic ring system. The sequence is that of Chorismate synthase from Rubrobacter xylanophilus (strain DSM 9941 / JCM 11954 / NBRC 16129 / PRD-1).